Here is a 407-residue protein sequence, read N- to C-terminus: Argininosuccinate synthase (407 aa).

ATP is bound by residues 11-19 (AYSGGLDTS) and Ala38. L-citrulline contacts are provided by Tyr91 and Ser96. Gly121 serves as a coordination point for ATP. L-aspartate contacts are provided by Thr123, Asn127, and Asp128. Asn127 serves as a coordination point for L-citrulline. L-citrulline-binding residues include Arg131, Ser181, Ser190, Glu266, and Tyr278.

It belongs to the argininosuccinate synthase family. Type 1 subfamily. Homotetramer.

It localises to the cytoplasm. The catalysed reaction is L-citrulline + L-aspartate + ATP = 2-(N(omega)-L-arginino)succinate + AMP + diphosphate + H(+). The protein operates within amino-acid biosynthesis; L-arginine biosynthesis; L-arginine from L-ornithine and carbamoyl phosphate: step 2/3. In Campylobacter concisus (strain 13826), this protein is Argininosuccinate synthase.